A 370-amino-acid polypeptide reads, in one-letter code: MKFIDEARIEVIAGDGGDGSASMRREKFVPFGGPDGGDGGRGGNVYAIADRNINTLIDYRYAKKHMARNGENGRGSDCYGKGGDDITLRMPVGTVVTDMDTGELIADLTEHDQQVMLAKGGSGGLGNLHFKSSTNRAPRQKTDGKPGERRMLRLELKVLADVGLLGMPNAGKSTFISSVSNAKPKIADYPFTTLAPNLGVVRVGPSKSFVIADIPGLIEGAAEGAGLGHQFLRHLQRTGVLLHLVDLAPFDESVDPVAEAKAIVGELRKYDEALYEKPRWLVLNKLDMVPEDERDARVADFLERFGWDGPVFQISALTGQGCEALCYAIYDYLAEHSDAHRAAEEEDLAADVRFRDAPPSDGGATSGGDA.

In terms of domain architecture, Obg spans 1-159; sequence MKFIDEARIE…RMLRLELKVL (159 aa). A disordered region spans residues 127-146; the sequence is NLHFKSSTNRAPRQKTDGKP. The 175-residue stretch at 160–334 folds into the OBG-type G domain; the sequence is ADVGLLGMPN…LCYAIYDYLA (175 aa). Residues 166 to 173, 191 to 195, 213 to 216, 284 to 287, and 315 to 317 each bind GTP; these read GMPNAGKS, FTTLA, DIPG, NKLD, and SAL. Mg(2+) is bound by residues Ser-173 and Thr-193. The interval 350–370 is disordered; it reads ADVRFRDAPPSDGGATSGGDA.

Belongs to the TRAFAC class OBG-HflX-like GTPase superfamily. OBG GTPase family. In terms of assembly, monomer. It depends on Mg(2+) as a cofactor.

Its subcellular location is the cytoplasm. An essential GTPase which binds GTP, GDP and possibly (p)ppGpp with moderate affinity, with high nucleotide exchange rates and a fairly low GTP hydrolysis rate. Plays a role in control of the cell cycle, stress response, ribosome biogenesis and in those bacteria that undergo differentiation, in morphogenesis control. The sequence is that of GTPase Obg from Burkholderia vietnamiensis (strain G4 / LMG 22486) (Burkholderia cepacia (strain R1808)).